We begin with the raw amino-acid sequence, 453 residues long: Zinc finger and BTB domain-containing protein 44 (453 aa).

Lys-4 participates in a covalent cross-link: Glycyl lysine isopeptide (Lys-Gly) (interchain with G-Cter in SUMO2). The 68-residue stretch at 31-98 folds into the BTB domain; sequence CDITIRVQDR…AYTATLSINT (68 aa). A phosphoserine mark is found at Ser-135, Ser-159, Ser-161, Ser-165, Ser-191, Ser-194, and Ser-199. The residue at position 200 (Thr-200) is a Phosphothreonine. A disordered region spans residues 241–265; sequence QPEKAKQAENTRTLELPGPSEAGRR. Residue Lys-290 forms a Glycyl lysine isopeptide (Lys-Gly) (interchain with G-Cter in SUMO2) linkage. 2 disordered regions span residues 295 to 324 and 336 to 368; these read SDEE…PGSE and SSSI…EDDR. Over residues 304–318 the composition is skewed to low complexity; it reads SQPVSASQSSLSDQQ. Residues 352-361 show a composition bias toward polar residues; sequence TLQSTSSTNA. C2H2-type zinc fingers lie at residues 399–421 and 427–449; these read FQCP…MLIH and FQCD…RLKH.

The protein resides in the nucleus. The polypeptide is Zinc finger and BTB domain-containing protein 44 (Zbtb44) (Rattus norvegicus (Rat)).